The sequence spans 314 residues: Deoxymugineic acid synthase 1-B (314 aa).

Residues 1–22 (MGAGDKTAAGMPRIGMGTAVQG) are disordered. NADP(+) is bound at residue aspartate 44. Tyrosine 49 (proton donor) is an active-site residue. Histidine 112 provides a ligand contact to substrate. Residues 158-159 (AN), glutamine 180, 258-266 (FDEARMREN), and 273-281 (ELTEEERRR) each bind NADP(+).

The protein belongs to the aldo/keto reductase family. In terms of tissue distribution, mostly expressed in root tissues, observed in mesocotyl and embryonic roots, seedling roots, crown and seedling leafes, mature bracts, anthers, pistil, caryopsis and embryos.

It catalyses the reaction 2'-deoxymugineate + NAD(+) = 3''-deamino-3''-oxonicotianamine + NADH + H(+). The enzyme catalyses 2'-deoxymugineate + NADP(+) = 3''-deamino-3''-oxonicotianamine + NADPH + H(+). It participates in siderophore biosynthesis. Functionally, catalyzes the reduction of a 3''-keto intermediate during the biosynthesis of 2'-deoxymugineic acid (DMA) from L-Met. Involved in the formation of phytosiderophores (MAs) belonging to the mugineic acid family and required to acquire iron. The protein is Deoxymugineic acid synthase 1-B of Triticum aestivum (Wheat).